The following is a 662-amino-acid chain: MESPTHPKPSKDKTLSWNLVFLVGILFTIDIGMANPSPHQVYNVTWTITNLVTGTKANATSMLGTLTDAFPTMYFDLCDIIGNTWNPSDQEPFPGYGCDQPMRRWQQRNTPFYVCPGHANRKQCGGPQDGFCAVWGCETTGETYWRPTSSWDYITVKKGVTQGIYQCSGGGWCGPCYDKAVHSSTTGASEGGRCNPLILQFTQKGRQTSWDGPKSWGLRLYRSGYDPIALFSVSRQVMTITPPQAMGPNLVLPDQKPPSRQSQIESRVTPHHSQGNGGTPGITLVNASIAPLSTPVTPASPKRIGTGDRLINLVQGTYLALNATDPNRTKDCWLCLVSRPPYYEGIAILGNYSNQTNPPPSCLSIPQHKLTISEVSGQGLCIGTVPKTHQALCNETQQGHTGAHYLAAPNGTYWACNTGLTPCISMAVLNWTSDFCVLIELWPRVTYHQPEYVYTHFAKAARFRREPISLTVALMLGGLTVGGIAAGVGTGTKALIETAQFRQLQMAMHTDIQALEESISALEKSLTSLSEVVLQNRRGLDILFLQEGGLCAALKEECCFYADHTGLVRDNMAKLRERLKQRQQLFDSQQGWFEGWFNKSPWFTTLISSIMGPLLILLLILLFGPCILNRLVQFVKDRISVVQALILTQQYQQIKQYDPDRP.

The first 34 residues, 1 to 34 (MESPTHPKPSKDKTLSWNLVFLVGILFTIDIGMA), serve as a signal peptide directing secretion. At 35–606 (NPSPHQVYNV…FNKSPWFTTL (572 aa)) the chain is on the extracellular side. N43 and N58 each carry an N-linked (GlcNAc...) asparagine; by host glycan. 2 disulfides stabilise this stretch: C115–C132 and C124–C137. The interval 245–279 (AMGPNLVLPDQKPPSRQSQIESRVTPHHSQGNGGT) is disordered. The segment covering 258 to 274 (PSRQSQIESRVTPHHSQ) has biased composition (polar residues). N286, N322, and N327 each carry an N-linked (GlcNAc...) asparagine; by host glycan. 3 disulfide bridges follow: C332/C335, C332/C559, and C551/C558. Positions 332 to 335 (CWLC) match the CXXC motif. N351, N354, N394, N410, and N430 each carry an N-linked (GlcNAc...) asparagine; by host glycan. The segment at 468-488 (ISLTVALMLGGLTVGGIAAGV) is fusion peptide. Coiled-coil stretches lie at residues 496–545 (IETA…ILFL) and 555–591 (KEECCFYADHTGLVRDNMAKLRERLKQRQQLFDSQQG). The immunosuppression stretch occupies residues 534 to 550 (LQNRRGLDILFLQEGGL). The CX6CC signature appears at 551–559 (CAALKEECC). Residues 607-627 (ISSIMGPLLILLLILLFGPCI) form a helical membrane-spanning segment. A lipid anchor (S-palmitoyl cysteine; by host) is attached at C626. Residues 628-662 (LNRLVQFVKDRISVVQALILTQQYQQIKQYDPDRP) are Cytoplasmic-facing.

In terms of assembly, the mature envelope protein (Env) consists of a trimer of SU-TM heterodimers attached by a labile interchain disulfide bond. Specific enzymatic cleavages in vivo yield mature proteins. Envelope glycoproteins are synthesized as an inactive precursor that is N-glycosylated and processed likely by host cell furin or by a furin-like protease in the Golgi to yield the mature SU and TM proteins. The cleavage site between SU and TM requires the minimal sequence [KR]-X-[KR]-R. The R-peptide is released from the C-terminus of the cytoplasmic tail of the TM protein upon particle formation as a result of proteolytic cleavage by the viral protease. Cleavage of this peptide is required for TM to become fusogenic. Post-translationally, the CXXC motif is highly conserved across a broad range of retroviral envelope proteins. It is thought to participate in the formation of a labile disulfide bond possibly with the CX6CC motif present in the transmembrane protein. Isomerization of the intersubunit disulfide bond to an SU intrachain disulfide bond is thought to occur upon receptor recognition in order to allow membrane fusion. In terms of processing, the transmembrane protein is palmitoylated. The R-peptide is palmitoylated.

The protein resides in the virion membrane. It is found in the host cell membrane. In terms of biological role, the surface protein (SU) attaches the virus to the host cell by binding to its receptor. This interaction triggers the refolding of the transmembrane protein (TM) and is thought to activate its fusogenic potential by unmasking its fusion peptide. Fusion occurs at the host cell plasma membrane. Functionally, the transmembrane protein (TM) acts as a class I viral fusion protein. Under the current model, the protein has at least 3 conformational states: pre-fusion native state, pre-hairpin intermediate state, and post-fusion hairpin state. During viral and target cell membrane fusion, the coiled coil regions (heptad repeats) assume a trimer-of-hairpins structure, positioning the fusion peptide in close proximity to the C-terminal region of the ectodomain. The formation of this structure appears to drive apposition and subsequent fusion of viral and target cell membranes. Membranes fusion leads to delivery of the nucleocapsid into the cytoplasm. This is Envelope glycoprotein (env) from Felidae (cat family).